Consider the following 221-residue polypeptide: 7-cyano-7-deazaguanine synthase (221 aa).

ATP is bound at residue Phe10–Leu20. Residues Cys187, Cys196, Cys199, and Cys202 each coordinate Zn(2+).

This sequence belongs to the QueC family. In terms of assembly, homodimer. Zn(2+) serves as cofactor.

It catalyses the reaction 7-carboxy-7-deazaguanine + NH4(+) + ATP = 7-cyano-7-deazaguanine + ADP + phosphate + H2O + H(+). The protein operates within purine metabolism; 7-cyano-7-deazaguanine biosynthesis. Its function is as follows. Catalyzes the ATP-dependent conversion of 7-carboxy-7-deazaguanine (CDG) to 7-cyano-7-deazaguanine (preQ(0)). The polypeptide is 7-cyano-7-deazaguanine synthase (Shouchella clausii (strain KSM-K16) (Alkalihalobacillus clausii)).